The following is a 492-amino-acid chain: Diacylglycerol kinase 7 (492 aa).

The DAGKc domain maps to 90 to 248 (APHAPMVVFI…SWKIVVSMPS (159 aa)).

The protein belongs to the eukaryotic diacylglycerol kinase family. Monomer. Highly expressed in flowers, and at low levels in roots, stems and leaves.

The enzyme catalyses a 1,2-diacyl-sn-glycerol + ATP = a 1,2-diacyl-sn-glycero-3-phosphate + ADP + H(+). Phosphorylates the second messenger diacylglycerol (DAG) to generate phosphatidic acid (PA), another important signaling molecule. PA is required for plant development and responses to abiotic stress and pathogen attack. May be involved in the accumulation of PA during cold stress xhibits high specificity for 1,2-dioleoyl-sn-glycerol (1,2-DOG), 1-palmitoyl, 2-oleoyl-sn-glycerol (1,2 POG), 1-stearoyl, 2-linoleoyl-sn-glycerol (1,2-SLG) and 1-oleoyl, 2-palmitoyl-sn-glycerol (1,2-OPG). The sequence is that of Diacylglycerol kinase 7 (DGK7) from Arabidopsis thaliana (Mouse-ear cress).